Consider the following 473-residue polypeptide: MGGEIITLQAGQCGNHVGKFLWSQLAKEHAIGTDGLSQLPDSSTERDDDTKPFFRENSRNKFTPRAIMMDSEPSVIADVENTFRGFFDPRNTWVASDGASAGNSWANGYDIGTRNQDDILNKIDKEIDSTDNFEGFQLLHSVAGGTGSGLGSNLLEALCDRYPKKILTTYSVFPARSSEVVVQSYNTILALRRLIEDSDATVVFDNASLLNISGKVFRNPNIDLQHTNQLISTIISSVTNSIRFPSYMYSSMSSIYSTLIPSPELHFLSPSFTPFTSDYIHDDIAHKGHSSYDVMLDLLDPSNSLVSTAMNNPTYFNVYNTIIGNVEPRQISRAMTKLQQRIKFPSWSSSAMHVNIGRRSPYLPLQPNENEVSGMMLSNMSTVVNVFENACNTFDKVFAKGAFLNNYNVGDLFQSMQNVQDEFAESREVVQSLMEDYVAAEQDSYLDDVLVDDENMVGELEEDLDADGDHKLV.

The segment at 33-56 (TDGLSQLPDSSTERDDDTKPFFRE) is disordered. Basic and acidic residues predominate over residues 43 to 56 (STERDDDTKPFFRE). GTP is bound at residue 143-149 (AGGTGSG).

It belongs to the tubulin family. In terms of assembly, interacts with SPC72, SPC97 and SPC98.

The protein localises to the cytoplasm. It is found in the cytoskeleton. Its subcellular location is the microtubule organizing center. It localises to the spindle pole body. Its function is as follows. Tubulin is the major constituent of microtubules. The gamma chain is found at microtubule organizing centers (MTOC) such as the spindle poles or the centrosome, suggesting that it is involved in the minus-end nucleation of microtubule assembly. TUB4 is an important spindle pole body component that organizes both cytoplasmic and nuclear microtubule arrays. The polypeptide is Tubulin gamma chain (TUB4) (Saccharomyces cerevisiae (strain ATCC 204508 / S288c) (Baker's yeast)).